Here is a 123-residue protein sequence, read N- to C-terminus: Small ribosomal subunit protein uS12 (123 aa).

A 3-methylthioaspartic acid modification is found at aspartate 89.

Belongs to the universal ribosomal protein uS12 family. Part of the 30S ribosomal subunit. Contacts proteins S8 and S17. May interact with IF1 in the 30S initiation complex.

Functionally, with S4 and S5 plays an important role in translational accuracy. Its function is as follows. Interacts with and stabilizes bases of the 16S rRNA that are involved in tRNA selection in the A site and with the mRNA backbone. Located at the interface of the 30S and 50S subunits, it traverses the body of the 30S subunit contacting proteins on the other side and probably holding the rRNA structure together. The combined cluster of proteins S8, S12 and S17 appears to hold together the shoulder and platform of the 30S subunit. The protein is Small ribosomal subunit protein uS12 of Rhodopseudomonas palustris (strain BisA53).